The chain runs to 287 residues: S-methyl-5'-thioadenosine phosphorylase (287 aa).

Phosphate-binding positions include threonine 13 and 55-56; that span reads RH. Methionine 186 is a binding site for substrate. Phosphate is bound at residue threonine 187. Residue 210–212 participates in substrate binding; it reads DYD.

The protein belongs to the PNP/MTAP phosphorylase family. MTAP subfamily. Homohexamer. Dimer of a homotrimer.

The enzyme catalyses S-methyl-5'-thioadenosine + phosphate = 5-(methylsulfanyl)-alpha-D-ribose 1-phosphate + adenine. The protein operates within amino-acid biosynthesis; L-methionine biosynthesis via salvage pathway; S-methyl-5-thio-alpha-D-ribose 1-phosphate from S-methyl-5'-thioadenosine (phosphorylase route): step 1/1. Functionally, catalyzes the reversible phosphorylation of S-methyl-5'-thioadenosine (MTA) to adenine and 5-methylthioribose-1-phosphate. Involved in the breakdown of MTA, a major by-product of polyamine biosynthesis. Responsible for the first step in the methionine salvage pathway after MTA has been generated from S-adenosylmethionine. Has broad substrate specificity with 6-aminopurine nucleosides as preferred substrates. This Leptospira interrogans serogroup Icterohaemorrhagiae serovar copenhageni (strain Fiocruz L1-130) protein is S-methyl-5'-thioadenosine phosphorylase.